Consider the following 353-residue polypeptide: Paraxanthine methyltransferase 2 (353 aa).

Tyr18 provides a ligand contact to S-adenosyl-L-methionine. Substrate-binding positions include Tyr18 and 21-25 (QSSYQ). S-adenosyl-L-methionine-binding positions include Gly59, 59–60 (GC), Asn65, 99–102 (FNDL), 128–130 (SFF), and 145–147 (SYA). 146–150 (YAFLF) is a binding site for substrate. Mg(2+)-binding residues include Asn167, Asp252, and Phe254. Substrate is bound by residues Ser301 and Tyr306.

It belongs to the methyltransferase superfamily. SABATH family. In terms of assembly, homodimer. The cofactor is Mg(2+).

The chain is Paraxanthine methyltransferase 2 from Arabidopsis thaliana (Mouse-ear cress).